A 389-amino-acid chain; its full sequence is Chorismate synthase (389 aa).

NADP(+) is bound by residues Arg-40 and Arg-46. Residues 131-133, 252-253, Gly-297, 312-316, and Arg-338 contribute to the FMN site; these read RSS, NA, and KPIPT.

Belongs to the chorismate synthase family. As to quaternary structure, homotetramer. It depends on FMNH2 as a cofactor.

It carries out the reaction 5-O-(1-carboxyvinyl)-3-phosphoshikimate = chorismate + phosphate. The protein operates within metabolic intermediate biosynthesis; chorismate biosynthesis; chorismate from D-erythrose 4-phosphate and phosphoenolpyruvate: step 7/7. Its function is as follows. Catalyzes the anti-1,4-elimination of the C-3 phosphate and the C-6 proR hydrogen from 5-enolpyruvylshikimate-3-phosphate (EPSP) to yield chorismate, which is the branch point compound that serves as the starting substrate for the three terminal pathways of aromatic amino acid biosynthesis. This reaction introduces a second double bond into the aromatic ring system. This Lactiplantibacillus plantarum (strain ATCC BAA-793 / NCIMB 8826 / WCFS1) (Lactobacillus plantarum) protein is Chorismate synthase.